The primary structure comprises 177 residues: Alkyl hydroperoxide reductase AhpD (177 aa).

The active-site Proton donor is the Cys-131. Cys-131 and Cys-134 are oxidised to a cystine. Cys-134 functions as the Cysteine sulfenic acid (-SOH) intermediate in the catalytic mechanism.

This sequence belongs to the AhpD family.

It carries out the reaction N(6)-[(R)-dihydrolipoyl]-L-lysyl-[lipoyl-carrier protein] + a hydroperoxide = N(6)-[(R)-lipoyl]-L-lysyl-[lipoyl-carrier protein] + an alcohol + H2O. In terms of biological role, antioxidant protein with alkyl hydroperoxidase activity. Required for the reduction of the AhpC active site cysteine residues and for the regeneration of the AhpC enzyme activity. This Solibacter usitatus (strain Ellin6076) protein is Alkyl hydroperoxide reductase AhpD.